The primary structure comprises 385 residues: 8-amino-7-oxononanoate synthase (385 aa).

A substrate-binding site is contributed by R21. Pyridoxal 5'-phosphate is bound at residue 108–109 (GF). Residue H133 participates in substrate binding. Pyridoxal 5'-phosphate-binding residues include S179, H207, and T233. N6-(pyridoxal phosphate)lysine is present on K236. Residue T352 coordinates substrate.

The protein belongs to the class-II pyridoxal-phosphate-dependent aminotransferase family. BioF subfamily. As to quaternary structure, homodimer. Requires pyridoxal 5'-phosphate as cofactor.

It catalyses the reaction 6-carboxyhexanoyl-[ACP] + L-alanine + H(+) = (8S)-8-amino-7-oxononanoate + holo-[ACP] + CO2. Its pathway is cofactor biosynthesis; biotin biosynthesis. Catalyzes the decarboxylative condensation of pimeloyl-[acyl-carrier protein] and L-alanine to produce 8-amino-7-oxononanoate (AON), [acyl-carrier protein], and carbon dioxide. This is 8-amino-7-oxononanoate synthase from Salmonella enteritidis PT4 (strain P125109).